The primary structure comprises 360 residues: Peptide chain release factor 1 (360 aa).

Q235 carries the N5-methylglutamine modification. The tract at residues 285-305 (KRQEAEASERRNLLGSGDRSD) is disordered.

It belongs to the prokaryotic/mitochondrial release factor family. In terms of processing, methylated by PrmC. Methylation increases the termination efficiency of RF1.

It localises to the cytoplasm. Its function is as follows. Peptide chain release factor 1 directs the termination of translation in response to the peptide chain termination codons UAG and UAA. The polypeptide is Peptide chain release factor 1 (Proteus mirabilis (strain HI4320)).